The primary structure comprises 174 residues: MSIKSRIRTIPHYPREGIMFRDITTLLKDPVGLRITIDEIAERYRAEKIDKVVGIESRGFIFAAPVAYALGAGFVPIRKQGKLPAETISCDYQLEYGYDKIEIHADAIDKDDRVLMIDDLIATGGTMEAAIKLVQEMGGKIIECCFVIDLPGVGGSTRLRQQDHPLYSLCSFDD.

The protein belongs to the purine/pyrimidine phosphoribosyltransferase family. In terms of assembly, homodimer.

The protein localises to the cytoplasm. The enzyme catalyses AMP + diphosphate = 5-phospho-alpha-D-ribose 1-diphosphate + adenine. The protein operates within purine metabolism; AMP biosynthesis via salvage pathway; AMP from adenine: step 1/1. Catalyzes a salvage reaction resulting in the formation of AMP, that is energically less costly than de novo synthesis. The polypeptide is Adenine phosphoribosyltransferase (Nitrosomonas eutropha (strain DSM 101675 / C91 / Nm57)).